A 456-amino-acid chain; its full sequence is uncharacterized protein (456 aa).

Residues 3-61 (TIKKNEVKTGKVIDLTHEGHGVVKVDRYPIFIPNALIDEEIKFKLIKVKKNFAIGKLIE) form the TRAM domain. Residues Cys74, Cys80, Cys83, and Cys162 each coordinate [4Fe-4S] cluster. S-adenosyl-L-methionine is bound by residues Gln286, Tyr315, Glu336, and Asp384. Cys411 (nucleophile) is an active-site residue.

This sequence belongs to the class I-like SAM-binding methyltransferase superfamily. RNA M5U methyltransferase family.

This is an uncharacterized protein from Staphylococcus epidermidis (strain ATCC 35984 / DSM 28319 / BCRC 17069 / CCUG 31568 / BM 3577 / RP62A).